The sequence spans 149 residues: Small ribosomal subunit protein uS11z (149 aa).

Positions 130-149 (VTPVPTDSTRRKGGRRGRRL) are disordered. Basic residues predominate over residues 140-149 (RKGGRRGRRL).

Belongs to the universal ribosomal protein uS11 family.

The polypeptide is Small ribosomal subunit protein uS11z (Zea mays (Maize)).